The chain runs to 438 residues: Innexin inx7 (438 aa).

Residues 1 to 23 are Cytoplasmic-facing; sequence MLNTFSSVRQYLKFDLTRVVIDN. A helical transmembrane segment spans residues 24–44; sequence IVFKLHYRWTFVILLVATLLI. Residues 45–58 lie on the Extracellular side of the membrane; that stretch reads TSRQYIGEHIQCLS. Residues 59–79 traverse the membrane as a helical segment; that stretch reads DGVVSPVINTFCFFTPTFTVV. At 80–112 the chain is on the cytoplasmic side; the sequence is RDQNQTAYRPGSEPPGIGAFDPEKDTIKRHAYY. Residues 113-133 traverse the membrane as a helical segment; it reads QWVPFVLFFQALCFYIPHALW. The Extracellular segment spans residues 134–283; sequence KSWEGGRIKA…VMALNIMNEK (150 aa). Residues 284–304 traverse the membrane as a helical segment; sequence IYIILWFWYAFLLIVTVLGLL. The Cytoplasmic portion of the chain corresponds to 305-438; the sequence is WRILTLCFYR…STSDMAKLPV (134 aa). 2 disordered regions span residues 381-402 and 415-438; these read NDVN…PELS and RRNG…KLPV. Residues 418–431 show a composition bias toward low complexity; sequence GSPSAGGAQGPSTS.

It belongs to the pannexin family. Expressed around gut lobes in embryonic stages 15-17.

The protein resides in the cell membrane. It is found in the cell junction. It localises to the gap junction. Functionally, structural components of the gap junctions. The sequence is that of Innexin inx7 (Inx7) from Drosophila melanogaster (Fruit fly).